The primary structure comprises 293 residues: tRNA-cytidine(32) 2-sulfurtransferase (293 aa).

A PP-loop motif motif is present at residues 62-67; sequence SGGKDS. The [4Fe-4S] cluster site is built by Cys-137, Cys-140, and Cys-228.

This sequence belongs to the TtcA family. Homodimer. Requires Mg(2+) as cofactor. The cofactor is [4Fe-4S] cluster.

Its subcellular location is the cytoplasm. The enzyme catalyses cytidine(32) in tRNA + S-sulfanyl-L-cysteinyl-[cysteine desulfurase] + AH2 + ATP = 2-thiocytidine(32) in tRNA + L-cysteinyl-[cysteine desulfurase] + A + AMP + diphosphate + H(+). The protein operates within tRNA modification. Its function is as follows. Catalyzes the ATP-dependent 2-thiolation of cytidine in position 32 of tRNA, to form 2-thiocytidine (s(2)C32). The sulfur atoms are provided by the cysteine/cysteine desulfurase (IscS) system. The protein is tRNA-cytidine(32) 2-sulfurtransferase of Brucella suis (strain ATCC 23445 / NCTC 10510).